Reading from the N-terminus, the 389-residue chain is MKTTMNFVFLFFLPLLINAKPKRVTLHIPLVHNGANFYDSKVVSLPLSSPHSQRGLAFMAEIHFGSPQKKQFLHMDTGSSLTWTQCFPCSDCYAQKIYPKYRPAASITYRDAMCEDSHPKSNPHFAFDPLTRICTYQQHYLDETNIKGTLAQEMITVDTHDGGFKRVHGVYFGCNTLSDGSYFTGTGILGLGVGKYSIIGEFGSKFSFCLGEISEPKASHNLILGDGANVQGHPTVINITEGHTIFQLESIIVGEEITLDDPVQVFVDTGSTLSHLSTNLYYKFVDAFDDLIGSRPLSYEPTLCYKADTIERLEKMDVGFKFDVGAELSVNIHNIFIQQGPPEIRCLAIQNNKESFSHVIIGVIAMQGYNVGYDLSAKTAYINKQDCDM.

The first 19 residues, 1 to 19 (MKTTMNFVFLFFLPLLINA), serve as a signal peptide directing secretion. Positions 58 to 383 (FMAEIHFGSP…DLSAKTAYIN (326 aa)) constitute a Peptidase A1 domain. Residue Asp-76 is part of the active site. Cys-86 and Cys-92 are joined by a disulfide. A glycan (N-linked (GlcNAc...) asparagine) is linked at Asn-238. Asp-268 is a catalytic residue. Residues Cys-304 and Cys-346 are joined by a disulfide bond.

It belongs to the peptidase A1 family.

In terms of biological role, probable aspartic protease activated by the transcription factor MYB80. May participate in the regulation of the timing of tapetal programmed cell death (PCD) which is critical for pollen development. The protein is Aspartyl protease UND of Arabidopsis thaliana (Mouse-ear cress).